Reading from the N-terminus, the 253-residue chain is Chloride intracellular channel protein 4 (253 aa).

N-acetylalanine is present on A2. The interval 2–101 is required for insertion into the membrane; that stretch reads ALSMPLNGLK…EEFLEEVLCP (100 aa). Position 4 is a phosphoserine (S4). Residue K24 is modified to N6-acetyllysine. The G-site motif lies at 35-38; sequence CPFS. Residues 37-57 traverse the membrane as a helical segment; sequence FSQRLFMILWLKGVVFSVTTV. The region spanning 81-244 is the GST C-terminal domain; sequence NSEVKTDVNK…PSDKEVEIAY (164 aa). N6-acetyllysine is present on K130. 3 positions are modified to phosphoserine: S132, S167, and S236. Position 244 is a phosphotyrosine (Y244).

It belongs to the chloride channel CLIC family. In terms of assembly, component of a multimeric complex consisting of several cytoskeletal proteins, including actin, ezrin, alpha-actinin, gelsolin, IQGAP1 and CLIC5A. Binds directly to brain dynamin I in a complex containing actin, tubulin and 14-3-3 isoforms. Monomer. Interacts with HRH3. Interacts with AKAP9. Detected in epithelial cells from colon, esophagus and kidney (at protein level). Expression is prominent in heart, kidney, placenta and skeletal muscle.

The protein resides in the cytoplasm. It localises to the cytoskeleton. It is found in the microtubule organizing center. Its subcellular location is the centrosome. The protein localises to the cytoplasmic vesicle membrane. The protein resides in the nucleus. It localises to the cell membrane. It is found in the mitochondrion. Its subcellular location is the cell junction. The protein localises to the endoplasmic reticulum membrane. The enzyme catalyses chloride(in) = chloride(out). The catalysed reaction is thiocyanate(in) = thiocyanate(out). It catalyses the reaction nitrate(in) = nitrate(out). It carries out the reaction iodide(out) = iodide(in). The enzyme catalyses bromide(in) = bromide(out). The catalysed reaction is fluoride(in) = fluoride(out). It catalyses the reaction choline(out) = choline(in). Its activity is regulated as follows. Inhibited by rapamycin, amphotericin B and IAA-94. In terms of biological role, in the soluble state, catalyzes glutaredoxin-like thiol disulfide exchange reactions with reduced glutathione as electron donor. Can insert into membranes and form voltage-dependent multi-ion conductive channels. Membrane insertion seems to be redox-regulated and may occur only under oxidizing conditions. Has alternate cellular functions like a potential role in angiogenesis or in maintaining apical-basolateral membrane polarity during mitosis and cytokinesis. Could also promote endothelial cell proliferation and regulate endothelial morphogenesis (tubulogenesis). Promotes cell-surface expression of HRH3. This chain is Chloride intracellular channel protein 4, found in Homo sapiens (Human).